Consider the following 764-residue polypeptide: Oxysterol-binding protein-related protein 10 (764 aa).

Residues 1 to 74 (MERAVQGTDG…PSGGGGRRRE (74 aa)) are disordered. 2 stretches are compositionally biased toward low complexity: residues 15 to 47 (NSSS…SAAA) and 55 to 65 (RSSPGSVAASP). Residues S29 and S30 each carry the phosphoserine modification. At R38 the chain carries Omega-N-methylarginine. Phosphoserine occurs at positions 57, 60, and 64. The PH domain maps to 74-171 (EPALEGVLSK…WVTQLRACAK (98 aa)). T196 carries the phosphothreonine modification. S201, S209, and S223 each carry phosphoserine. Disordered regions lie at residues 304–335 (GQPS…NGTL) and 354–391 (AEDE…TELG). The span at 359 to 370 (TSQPEPEPNSGS) shows a compositional bias: polar residues. Positions 374–389 (LSEDEKSDNEDKEETE) are enriched in acidic residues. A 1,2-diacyl-sn-glycero-3-phospho-(1D-myo-inositol 4-phosphate) contacts are provided by residues 413–418 (LTKVVL) and 477–480 (KPYN). Residues 413 to 418 (LTKVVL) and N480 contribute to the a 1,2-diacyl-sn-glycero-3-phospho-L-serine site. The tract at residues 501 to 520 (KRTASRSPASCHEHPMADDP) is disordered. Basic and acidic residues predominate over residues 511-520 (CHEHPMADDP). Residue 535–536 (HH) coordinates a 1,2-diacyl-sn-glycero-3-phospho-(1D-myo-inositol 4-phosphate). S561 serves as a coordination point for a 1,2-diacyl-sn-glycero-3-phospho-L-serine. A coiled-coil region spans residues 713-740 (DIDAATEQKRHLEEKQRVEERKRENLRT). Residues K721, E725, and R729 each coordinate a 1,2-diacyl-sn-glycero-3-phospho-(1D-myo-inositol 4-phosphate).

This sequence belongs to the OSBP family. As to quaternary structure, interacts with OSBPL9. Interacts with DIAPH1.

The protein localises to the cytoplasm. It is found in the cytoskeleton. Its function is as follows. Probable lipid transporter involved in lipid countertransport between the endoplasmic reticulum and the plasma membrane. Its ability to bind phosphatidylserine, suggests that it specifically exchanges phosphatidylserine with phosphatidylinositol 4-phosphate (PI4P), delivering phosphatidylserine to the plasma membrane in exchange for PI4P. Plays a role in negative regulation of lipid biosynthesis. Negatively regulates APOB secretion from hepatocytes. Binds cholesterol and acidic phospholipids. Also binds 25-hydroxycholesterol. Binds phosphatidylserine. This chain is Oxysterol-binding protein-related protein 10 (OSBPL10), found in Homo sapiens (Human).